We begin with the raw amino-acid sequence, 396 residues long: Elongation factor Tu (396 aa).

The region spanning 10 to 205 (KPHVNIGTIG…AVDESIPDPV (196 aa)) is the tr-type G domain. Positions 19-26 (GHVDHGKT) are G1. 19 to 26 (GHVDHGKT) is a GTP binding site. Residue Thr26 coordinates Mg(2+). The tract at residues 62 to 66 (GITIN) is G2. Residues 83–86 (DAPG) form a G3 region. Residues 83–87 (DAPGH) and 138–141 (NKAD) contribute to the GTP site. The segment at 138-141 (NKAD) is G4. The interval 175–177 (SAL) is G5.

It belongs to the TRAFAC class translation factor GTPase superfamily. Classic translation factor GTPase family. EF-Tu/EF-1A subfamily. In terms of assembly, monomer.

The protein localises to the cytoplasm. It carries out the reaction GTP + H2O = GDP + phosphate + H(+). GTP hydrolase that promotes the GTP-dependent binding of aminoacyl-tRNA to the A-site of ribosomes during protein biosynthesis. The polypeptide is Elongation factor Tu (Mycobacterium bovis (strain ATCC BAA-935 / AF2122/97)).